Here is a 744-residue protein sequence, read N- to C-terminus: Protein pthb1 homolog (744 aa).

Residues 722–733 (EHSPKELPKIRE) show a composition bias toward basic and acidic residues. The tract at residues 722 to 744 (EHSPKELPKIREEEEEEEQQVTA) is disordered. Residues 734–744 (EEEEEEQQVTA) show a composition bias toward acidic residues.

As to quaternary structure, part of BBSome complex, that contains bbs-1, bbs-2, bbs-4, bbs-5, osm-12, bbs-8/ttc-8 and bbs-9. Interacts with bbs-1.

Its function is as follows. Component of the BBSome complex. The BBSome complex is thought to function as a coat complex required for sorting of specific membrane proteins to the primary cilia. The BBSome complex is required for ciliogenesis but is dispensable for centriolar satellite function. Required for proper BBSome complex assembly and its ciliary localization. Required for cilia biogenesis and both the assembly and movement of intraflagellar transport proteins along the ciliary axoneme. In ciliated sensory neurons, required for the sensation of nitric oxide and avoidance of NO-producing organisms like P.aeruginosa. The polypeptide is Protein pthb1 homolog (Caenorhabditis elegans).